Here is a 100-residue protein sequence, read N- to C-terminus: Large ribosomal subunit protein bL28 (100 aa).

The protein belongs to the bacterial ribosomal protein bL28 family.

In Gluconobacter oxydans (strain 621H) (Gluconobacter suboxydans), this protein is Large ribosomal subunit protein bL28.